The following is a 396-amino-acid chain: S-adenosylmethionine synthase (396 aa).

Residue His-14 coordinates ATP. Asp-16 contributes to the Mg(2+) binding site. Glu-42 serves as a coordination point for K(+). Residues Glu-55 and Gln-98 each contribute to the L-methionine site. The flexible loop stretch occupies residues 98–108; it reads QSPDIAQGVHG. Residues 167–169, 234–235, Asp-243, 249–250, Ser-266, and Lys-270 contribute to the ATP site; these read DAK, RF, and RK. Asp-243 contacts L-methionine. Residue Lys-274 coordinates L-methionine.

Belongs to the AdoMet synthase family. Homotetramer; dimer of dimers. Mg(2+) is required as a cofactor. It depends on K(+) as a cofactor.

It localises to the cytoplasm. It catalyses the reaction L-methionine + ATP + H2O = S-adenosyl-L-methionine + phosphate + diphosphate. The protein operates within amino-acid biosynthesis; S-adenosyl-L-methionine biosynthesis; S-adenosyl-L-methionine from L-methionine: step 1/1. In terms of biological role, catalyzes the formation of S-adenosylmethionine (AdoMet) from methionine and ATP. The overall synthetic reaction is composed of two sequential steps, AdoMet formation and the subsequent tripolyphosphate hydrolysis which occurs prior to release of AdoMet from the enzyme. This Treponema pallidum (strain Nichols) protein is S-adenosylmethionine synthase.